The chain runs to 218 residues: Large ribosomal subunit protein uL1 (218 aa).

This sequence belongs to the universal ribosomal protein uL1 family. Part of the 50S ribosomal subunit.

In terms of biological role, probably involved in E site tRNA release. Binds directly to 23S rRNA. Protein L1 is also a translational repressor protein, it controls the translation of its operon by binding to its mRNA. The sequence is that of Large ribosomal subunit protein uL1 from Saccharolobus solfataricus (strain ATCC 35092 / DSM 1617 / JCM 11322 / P2) (Sulfolobus solfataricus).